The primary structure comprises 211 residues: MVKLILVRHAESEWNPVGRYQGLLDPDLSERGKKQAKLLAQELSREHLDVIYSSPLKRTYLTALEIAEAKNLEVIKEDRIIEIDHGMWSGMLVEEVMEKYPEDFRRWVEEPHKVEFQGGESLASVYNRVKGFLEEVRKRHWNQTVVVVSHTVPMRAMYCALLGVDLSKFWSFGCDNASYSVIHMEERRNVILKLNITCHLGEFYVEAHKAI.

The active-site Tele-phosphohistidine intermediate is the His-9. The active site involves His-150.

This sequence belongs to the histidine phosphatase superfamily. Metal-independent phosphoserine phosphatase family. Homodimer. Can also form a heterodimer with PspB.

The enzyme catalyses O-phospho-L-serine + H2O = L-serine + phosphate. It catalyses the reaction O-phospho-D-serine + H2O = D-serine + phosphate. It participates in amino-acid biosynthesis; L-serine biosynthesis; L-serine from 3-phospho-D-glycerate: step 3/3. Activity is not inhibited by EDTA in vitro, nor enhanced by the addition of Mg(2+). Functionally, catalyzes the dephosphorylation of L-phosphoserine to serine and inorganic phosphate. Is poorly or not active toward D-phosphoserine, DL-phosphothreonine, 3-phosphoglycerate, para-nitrophenylphosphate, and fructose-6-phosphate. Does not display phosphoglycerate mutase activity. This is Phosphoserine phosphatase 1 (pspA) from Hydrogenobacter thermophilus (strain DSM 6534 / IAM 12695 / TK-6).